The following is a 338-amino-acid chain: Anthranilate phosphoribosyltransferase (338 aa).

Residues glycine 78, 81 to 82 (GD), threonine 86, 88 to 91 (NIST), 106 to 114 (KHGNRSVSS), and serine 118 contribute to the 5-phospho-alpha-D-ribose 1-diphosphate site. Glycine 78 contributes to the anthranilate binding site. Serine 90 is a binding site for Mg(2+). Asparagine 109 contacts anthranilate. Arginine 164 is an anthranilate binding site. Residues aspartate 223 and glutamate 224 each coordinate Mg(2+).

It belongs to the anthranilate phosphoribosyltransferase family. In terms of assembly, homodimer. Mg(2+) is required as a cofactor.

It catalyses the reaction N-(5-phospho-beta-D-ribosyl)anthranilate + diphosphate = 5-phospho-alpha-D-ribose 1-diphosphate + anthranilate. It participates in amino-acid biosynthesis; L-tryptophan biosynthesis; L-tryptophan from chorismate: step 2/5. Its function is as follows. Catalyzes the transfer of the phosphoribosyl group of 5-phosphorylribose-1-pyrophosphate (PRPP) to anthranilate to yield N-(5'-phosphoribosyl)-anthranilate (PRA). This Bacillus subtilis (strain 168) protein is Anthranilate phosphoribosyltransferase.